The chain runs to 707 residues: Alpha-hemolysin translocation ATP-binding protein HlyB (707 aa).

Positions 3–125 (SCHKIDYGLY…ALYQGHIILI (123 aa)) constitute a Peptidase C39 domain. Histidine 83 is an active-site residue. The 283-residue stretch at 154–436 (FIETLVVSVF…LAQIWQDFQQ (283 aa)) folds into the ABC transmembrane type-1 domain. Transmembrane regions (helical) follow at residues 158–178 (LVVS…FQVV), 191–211 (LNVI…LSGL), 269–289 (ALTS…MWYY), 295–315 (LVIL…SPIL), and 388–408 (VMII…LSIG). One can recognise an ABC transporter domain in the interval 468–703 (ITFRNIRFRY…PESLYSYLYQ (236 aa)). 502–509 (GRSGSGKS) provides a ligand contact to ATP.

It belongs to the ABC transporter superfamily. Protein-1 exporter (TC 3.A.1.109) family. In terms of assembly, homodimer.

It localises to the cell inner membrane. Its function is as follows. Part of the ABC transporter complex HlyBD involved in hemolysin export. Transmembrane domains (TMD) form a pore in the inner membrane and the ATP-binding domain (NBD) is responsible for energy generation. In Escherichia coli, this protein is Alpha-hemolysin translocation ATP-binding protein HlyB (hlyB).